We begin with the raw amino-acid sequence, 41 residues long: Large ribosomal subunit protein bL36 (41 aa).

It belongs to the bacterial ribosomal protein bL36 family.

The polypeptide is Large ribosomal subunit protein bL36 (Xanthobacter autotrophicus (strain ATCC BAA-1158 / Py2)).